The sequence spans 710 residues: Elongation factor G (710 aa).

Positions 8-297 constitute a tr-type G domain; that stretch reads ERVRNIGIAA…AVVDYLPSPI (290 aa). Residues 17 to 24, 96 to 100, and 150 to 153 contribute to the GTP site; these read AHIDAGKT, DTPGH, and NKMD.

The protein belongs to the TRAFAC class translation factor GTPase superfamily. Classic translation factor GTPase family. EF-G/EF-2 subfamily.

The protein resides in the cytoplasm. Its function is as follows. Catalyzes the GTP-dependent ribosomal translocation step during translation elongation. During this step, the ribosome changes from the pre-translocational (PRE) to the post-translocational (POST) state as the newly formed A-site-bound peptidyl-tRNA and P-site-bound deacylated tRNA move to the P and E sites, respectively. Catalyzes the coordinated movement of the two tRNA molecules, the mRNA and conformational changes in the ribosome. The chain is Elongation factor G from Synechococcus sp. (strain JA-3-3Ab) (Cyanobacteria bacterium Yellowstone A-Prime).